The following is a 280-amino-acid chain: Golgi to ER traffic protein 2 (280 aa).

Basic and acidic residues-rich tracts occupy residues 1–17 (MSLSEAEKRKILRERRQ), 44–62 (SALDEKPEVVEEIPREAVK), and 71–80 (AKKESTAQAK). The interval 1–80 (MSLSEAEKRK…AKKESTAQAK (80 aa)) is disordered. The Cytoplasmic segment spans residues 1 to 146 (MSLSEAEKRK…VEYHKYRVNT (146 aa)). Residues 147-166 (LTAKTTLVKWIVLLAYIFLL) traverse the membrane as a helical segment. At 167-191 (TRTDDTYFPFVVRSYLPEVFTSQSS) the chain is on the lumenal side. Residues 192–211 (FFSIFLTFEILATSIYYQLS) traverse the membrane as a helical segment. Residues 212 to 258 (VGVERETGVKTLQDTSKIVSLVSMVPEGILPIADLRGKVILAMKYWN) lie on the Cytoplasmic side of the membrane. A helical membrane pass occupies residues 259-279 (IIAMMIGDVCFVLVAIGLVSQ). Position 280 (I280) is a topological domain, lumenal.

Belongs to the GET2 family. In terms of assembly, component of the Golgi to ER traffic (GET) complex, which is composed of GET1, GET2 and GET3. Within the complex, GET1 and GET2 form a heterotetramer which is stabilized by phosphatidylinositol binding and which binds to the GET3 homodimer.

Its subcellular location is the endoplasmic reticulum membrane. The protein localises to the golgi apparatus membrane. Its function is as follows. Required for the post-translational delivery of tail-anchored (TA) proteins to the endoplasmic reticulum. Together with GET1, acts as a membrane receptor for soluble GET3, which recognizes and selectively binds the transmembrane domain of TA proteins in the cytosol. The GET complex cooperates with the HDEL receptor ERD2 to mediate the ATP-dependent retrieval of resident ER proteins that contain a C-terminal H-D-E-L retention signal from the Golgi to the ER. The protein is Golgi to ER traffic protein 2 of Candida glabrata (strain ATCC 2001 / BCRC 20586 / JCM 3761 / NBRC 0622 / NRRL Y-65 / CBS 138) (Yeast).